Consider the following 460-residue polypeptide: Adenylyltransferase and sulfurtransferase MOCS3 (460 aa).

Residues G92, D113, 120–124, K137, and 181–182 contribute to the ATP site; these read SNLAR and DN. Residues 158–238 form an interaction with NFS1 region; that stretch reads PRALAEDWAL…RPPPPETVTN (81 aa). Residues C222 and C225 each contribute to the Zn(2+) site. The Glycyl thioester intermediate; for adenylyltransferase activity role is filled by C239. Positions 297 and 300 each coordinate Zn(2+). Cysteines 316 and 324 form a disulfide. The region spanning 347-458 is the Rhodanese domain; the sequence is SGAPHVLLDV…WAAKIDGTFP (112 aa). C412 (cysteine persulfide intermediate; for sulfurtransferase activity) is an active-site residue. At C412 the chain carries Cysteine persulfide.

It in the N-terminal section; belongs to the HesA/MoeB/ThiF family. UBA4 subfamily. In terms of assembly, interacts with NFS1. The cofactor is Zn(2+).

It is found in the cytoplasm. The protein resides in the cytosol. It catalyses the reaction [molybdopterin-synthase sulfur-carrier protein]-C-terminal Gly-Gly + ATP + H(+) = [molybdopterin-synthase sulfur-carrier protein]-C-terminal Gly-Gly-AMP + diphosphate. It carries out the reaction [molybdopterin-synthase sulfur-carrier protein]-C-terminal Gly-Gly-AMP + S-sulfanyl-L-cysteinyl-[cysteine desulfurase] + AH2 = [molybdopterin-synthase sulfur-carrier protein]-C-terminal-Gly-aminoethanethioate + L-cysteinyl-[cysteine desulfurase] + A + AMP + 2 H(+). Its pathway is tRNA modification; 5-methoxycarbonylmethyl-2-thiouridine-tRNA biosynthesis. It participates in cofactor biosynthesis; molybdopterin biosynthesis. Its function is as follows. Plays a central role in 2-thiolation of mcm(5)S(2)U at tRNA wobble positions of cytosolic tRNA(Lys), tRNA(Glu) and tRNA(Gln). Also essential during biosynthesis of the molybdenum cofactor. Acts by mediating the C-terminal thiocarboxylation of sulfur carriers URM1 and MOCS2A. Its N-terminus first activates URM1 and MOCS2A as acyl-adenylates (-COAMP), then the persulfide sulfur on the catalytic cysteine is transferred to URM1 and MOCS2A to form thiocarboxylation (-COSH) of their C-terminus. The reaction probably involves hydrogen sulfide that is generated from the persulfide intermediate and that acts as a nucleophile towards URM1 and MOCS2A. Subsequently, a transient disulfide bond is formed. Does not use thiosulfate as sulfur donor; NFS1 acting as a sulfur donor for thiocarboxylation reactions. The protein is Adenylyltransferase and sulfurtransferase MOCS3 (Mocs3) of Mus musculus (Mouse).